Consider the following 327-residue polypeptide: GFKFTFFVSIMIYWHVVGEPKEKGQLYNLPAEIPCPTLAPPTPPSHGPAPGNIFFLETSDRTNPNFLFMCSVESAARTHPESHVLVLMKGLPGGNASLPRHLGISLLSCFPNVQMLPLDLRELFRDTPLADWYAAVQGRWEPYLLPVLSDASRIALMWKFGGIYLDTDFIVLKNLRNLTNVLGTQSRYVLNGAFLAFERXHEFMALCMXDFVDHYNGWIWGHQGPQLLTRVFKKWCSIRSLAESRACRGVTTLPPEAFYPIPWQDWKKYFEDINPEELPRLFSATYAVHVWNKKSQGTRFEATSRALLAQLHARYCPTTHEAMKMYL.

The DXD motif signature appears at 166–168; sequence DTD.

This sequence belongs to the glycosyltransferase 32 family.

It is found in the golgi apparatus membrane. The enzyme catalyses a beta-D-Gal-(1-&gt;4)-beta-D-Glc-(1&lt;-&gt;1)-Cer(d18:1(4E)) + UDP-alpha-D-galactose = a globoside Gb3Cer (d18:1(4E)) + UDP + H(+). It catalyses the reaction a beta-D-Gal-(1&lt;-&gt;1')-ceramide + UDP-alpha-D-galactose = alpha-D-Gal-(1-&gt;4)-beta-D-Gal-(1&lt;-&gt;1')-Cer + UDP + H(+). The protein operates within glycolipid biosynthesis. Functionally, catalyzes the transfer of galactose from UDP-alpha-D-galactose to lactosylceramide/beta-D-galactosyl-(1-&gt;4)-beta-D-glucosyl-(1&lt;-&gt;1)-ceramide(d18:1(4E)) to produce globotriaosylceramide/globoside Gb3Cer (d18:1(4E)). Also able to transfer galactose to galactosylceramide/beta-D-Gal-(1&lt;-&gt;1')-Cer. Globoside Gb3Cer is a glycosphingolipid of the globo serie, one of the major types of neutral root structures of glycosphingolipids, that constitute a significant portion of mammalian cell membranes. The sequence is that of Lactosylceramide 4-alpha-galactosyltransferase (A4GALT) from Gorilla gorilla gorilla (Western lowland gorilla).